Reading from the N-terminus, the 464-residue chain is Bifunctional protein GlmU (464 aa).

A pyrophosphorylase region spans residues 1–232; that stretch reads MKHDELAAVI…ADEAMGINDR (232 aa). Residues 11-14, lysine 25, glutamine 76, and 81-82 each bind UDP-N-acetyl-alpha-D-glucosamine; these read LAAG and GT. Residue aspartate 106 participates in Mg(2+) binding. UDP-N-acetyl-alpha-D-glucosamine is bound by residues glycine 143, glutamate 157, asparagine 172, and asparagine 230. Asparagine 230 serves as a coordination point for Mg(2+). Positions 233 to 253 are linker; that stretch reads VQLAQASALMRRRINENLMRA. Residues 254–464 are N-acetyltransferase; sequence GVSFIDPEQT…RHDPKCKNKD (211 aa). UDP-N-acetyl-alpha-D-glucosamine is bound by residues arginine 336 and lysine 354. Residue histidine 366 is the Proton acceptor of the active site. Positions 369 and 380 each coordinate UDP-N-acetyl-alpha-D-glucosamine. Acetyl-CoA contacts are provided by residues 389 to 390, serine 408, alanine 426, and arginine 443; that span reads NY.

The protein in the N-terminal section; belongs to the N-acetylglucosamine-1-phosphate uridyltransferase family. This sequence in the C-terminal section; belongs to the transferase hexapeptide repeat family. In terms of assembly, homotrimer. The cofactor is Mg(2+).

The protein localises to the cytoplasm. It carries out the reaction alpha-D-glucosamine 1-phosphate + acetyl-CoA = N-acetyl-alpha-D-glucosamine 1-phosphate + CoA + H(+). The catalysed reaction is N-acetyl-alpha-D-glucosamine 1-phosphate + UTP + H(+) = UDP-N-acetyl-alpha-D-glucosamine + diphosphate. The protein operates within nucleotide-sugar biosynthesis; UDP-N-acetyl-alpha-D-glucosamine biosynthesis; N-acetyl-alpha-D-glucosamine 1-phosphate from alpha-D-glucosamine 6-phosphate (route II): step 2/2. It functions in the pathway nucleotide-sugar biosynthesis; UDP-N-acetyl-alpha-D-glucosamine biosynthesis; UDP-N-acetyl-alpha-D-glucosamine from N-acetyl-alpha-D-glucosamine 1-phosphate: step 1/1. Its pathway is bacterial outer membrane biogenesis; LPS lipid A biosynthesis. Its function is as follows. Catalyzes the last two sequential reactions in the de novo biosynthetic pathway for UDP-N-acetylglucosamine (UDP-GlcNAc). The C-terminal domain catalyzes the transfer of acetyl group from acetyl coenzyme A to glucosamine-1-phosphate (GlcN-1-P) to produce N-acetylglucosamine-1-phosphate (GlcNAc-1-P), which is converted into UDP-GlcNAc by the transfer of uridine 5-monophosphate (from uridine 5-triphosphate), a reaction catalyzed by the N-terminal domain. This chain is Bifunctional protein GlmU, found in Syntrophotalea carbinolica (strain DSM 2380 / NBRC 103641 / GraBd1) (Pelobacter carbinolicus).